The chain runs to 209 residues: Dual specificity protein phosphatase 22 (209 aa).

Residues 4-144 (GMNKILTGLF…LEDFGKCEVH (141 aa)) form the Tyrosine-protein phosphatase domain. Catalysis depends on Cys-88, which acts as the Phosphocysteine intermediate. Positions 169 to 192 (LDKHKQQEAAESQNATSSGRQWNS) are disordered. Polar residues predominate over residues 177–190 (AAESQNATSSGRQW).

It belongs to the protein-tyrosine phosphatase family. Non-receptor class dual specificity subfamily.

Its subcellular location is the cytoplasm. The protein localises to the nucleus. The catalysed reaction is O-phospho-L-tyrosyl-[protein] + H2O = L-tyrosyl-[protein] + phosphate. It carries out the reaction O-phospho-L-seryl-[protein] + H2O = L-seryl-[protein] + phosphate. It catalyses the reaction O-phospho-L-threonyl-[protein] + H2O = L-threonyl-[protein] + phosphate. Its function is as follows. Activates the Jnk signaling pathway. Dephosphorylates and deactivates p38 and stress-activated protein kinase/c-Jun N-terminal kinase (SAPK/JNK). The protein is Dual specificity protein phosphatase 22 (dusp22) of Xenopus laevis (African clawed frog).